The primary structure comprises 130 residues: Small ribosomal subunit protein uS9 (130 aa).

The interval 98–130 (LKRAGLLTRDPRMKERKKPGLKKARRSPQFSKR) is disordered. Basic residues predominate over residues 111 to 130 (KERKKPGLKKARRSPQFSKR).

This sequence belongs to the universal ribosomal protein uS9 family.

This Staphylococcus haemolyticus (strain JCSC1435) protein is Small ribosomal subunit protein uS9.